The following is a 406-amino-acid chain: Probable endo-xylogalacturonan hydrolase A (406 aa).

Residues 1 to 18 form the signal peptide; the sequence is MLYPRNLALFSLLSLSSA. 4 PbH1 repeats span residues 183–213, 214–235, 237–257, and 299–320; these read TQHV…DIGA, STHV…AFKP, SNYV…SVGS, and VKNV…QIES. The active-site Proton donor is Asp-228. His-251 is an active-site residue. N-linked (GlcNAc...) asparagine glycosylation is present at Asn-301.

It belongs to the glycosyl hydrolase 28 family.

It is found in the secreted. Pectinolytic enzyme involved in the degradation of xylogalacturonan (xga), a galacturonan backbone heavily substituted with xylose, and which is one important component of the hairy regions of pectin. Activity requires a galacturonic acid backbone substituted with xylose. The polypeptide is Probable endo-xylogalacturonan hydrolase A (xghA) (Aspergillus fumigatus (strain ATCC MYA-4609 / CBS 101355 / FGSC A1100 / Af293) (Neosartorya fumigata)).